The sequence spans 216 residues: Pyrophosphatase PpaX (216 aa).

Asp-9 serves as the catalytic Nucleophile.

Belongs to the HAD-like hydrolase superfamily. PpaX family. Mg(2+) is required as a cofactor.

The enzyme catalyses diphosphate + H2O = 2 phosphate + H(+). Functionally, hydrolyzes pyrophosphate formed during P-Ser-HPr dephosphorylation by HPrK/P. Might play a role in controlling the intracellular pyrophosphate pool. This Bacillus cereus (strain B4264) protein is Pyrophosphatase PpaX.